The chain runs to 732 residues: Prolyl 3-hydroxylase 3 (732 aa).

The N-terminal stretch at Met1–Pro19 is a signal peptide. The span at Pro15–Pro25 shows a compositional bias: pro residues. Residues Pro15–Pro35 are disordered. TPR repeat units lie at residues Pro39–Leu72, Arg152–His185, Tyr214–His247, and Leu312–Asp345. Residues Asn327 and Asn458 are each glycosylated (N-linked (GlcNAc...) asparagine). The Fe2OG dioxygenase domain maps to Thr557–Trp671. Fe cation contacts are provided by His580, Asp582, and His652. Residue Arg662 is part of the active site. A coiled-coil region spans residues Glu674–Asp703. The span at Ser676–Leu687 shows a compositional bias: basic and acidic residues. A disordered region spans residues Ser676–Leu732. Acidic residues predominate over residues Gln688 to Asp698. The segment covering Lys722–Leu732 has biased composition (basic residues). Residues Arg729 to Leu732 carry the Prevents secretion from ER motif.

Belongs to the leprecan family. As to quaternary structure, identified in a complex with PLOD1 and P3H4. It depends on Fe cation as a cofactor. Requires L-ascorbate as cofactor. Detected in kidney (at protein level).

It is found in the endoplasmic reticulum. It carries out the reaction L-prolyl-[collagen] + 2-oxoglutarate + O2 = trans-3-hydroxy-L-prolyl-[collagen] + succinate + CO2. In terms of biological role, part of a complex composed of PLOD1, P3H3 and P3H4 that catalyzes hydroxylation of lysine residues in collagen alpha chains and is required for normal assembly and cross-linkling of collagen fibrils. Required for normal hydroxylation of lysine residues in type I collagen chains in skin, bone, tendon, aorta and cornea. Required for normal skin stability via its role in hydroxylation of lysine residues in collagen alpha chains and in collagen fibril assembly. Apparently not required for normal prolyl 3-hydroxylation on collagen chains, possibly because it functions redundantly with other prolyl 3-hydroxylases. The protein is Prolyl 3-hydroxylase 3 of Mus musculus (Mouse).